Here is a 277-residue protein sequence, read N- to C-terminus: 3-methyl-2-oxobutanoate hydroxymethyltransferase (277 aa).

Residues D53 and D96 each contribute to the Mg(2+) site. 3-methyl-2-oxobutanoate-binding positions include 53–54 (DS), D96, and K126. E128 lines the Mg(2+) pocket. The Proton acceptor role is filled by E195.

It belongs to the PanB family. Homodecamer; pentamer of dimers. Mg(2+) is required as a cofactor.

Its subcellular location is the cytoplasm. The enzyme catalyses 3-methyl-2-oxobutanoate + (6R)-5,10-methylene-5,6,7,8-tetrahydrofolate + H2O = 2-dehydropantoate + (6S)-5,6,7,8-tetrahydrofolate. Its pathway is cofactor biosynthesis; (R)-pantothenate biosynthesis; (R)-pantoate from 3-methyl-2-oxobutanoate: step 1/2. In terms of biological role, catalyzes the reversible reaction in which hydroxymethyl group from 5,10-methylenetetrahydrofolate is transferred onto alpha-ketoisovalerate to form ketopantoate. This is 3-methyl-2-oxobutanoate hydroxymethyltransferase from Chlorobium phaeobacteroides (strain DSM 266 / SMG 266 / 2430).